The primary structure comprises 306 residues: IN2-2 protein (306 aa).

Tyr64 functions as the Proton donor in the catalytic mechanism. His131 contributes to the substrate binding site. 210 to 220 (SPLGRGFFSSG) serves as a coordination point for NADP(+). Residues 272-306 (LGSPPRKRRLPHTWHNKNRQLQPERGGTVCEAYTG) are disordered. Positions 276 to 289 (PRKRRLPHTWHNKN) are enriched in basic residues.

Belongs to the aldo/keto reductase family. Aldo/keto reductase 2 subfamily. In terms of tissue distribution, leaves and roots.

In Zea mays (Maize), this protein is IN2-2 protein (IN2-2).